A 699-amino-acid polypeptide reads, in one-letter code: Polyribonucleotide nucleotidyltransferase (699 aa).

Positions 484 and 490 each coordinate Mg(2+). A KH domain is found at 551 to 610 (PRITTIQVKPDQVRTVIGPGGKNVRGIIEATGCAIDIEDDGRINIASADGDACKAAIKMI). Positions 620 to 688 (GKLYMATVKK…RQGKIKLSRK (69 aa)) constitute an S1 motif domain.

Belongs to the polyribonucleotide nucleotidyltransferase family. Requires Mg(2+) as cofactor.

Its subcellular location is the cytoplasm. The catalysed reaction is RNA(n+1) + phosphate = RNA(n) + a ribonucleoside 5'-diphosphate. Functionally, involved in mRNA degradation. Catalyzes the phosphorolysis of single-stranded polyribonucleotides processively in the 3'- to 5'-direction. The sequence is that of Polyribonucleotide nucleotidyltransferase from Syntrophotalea carbinolica (strain DSM 2380 / NBRC 103641 / GraBd1) (Pelobacter carbinolicus).